The sequence spans 245 residues: tRNA pseudouridine synthase A (245 aa).

Aspartate 52 serves as the catalytic Nucleophile. Substrate is bound at residue tyrosine 111.

The protein belongs to the tRNA pseudouridine synthase TruA family. As to quaternary structure, homodimer.

The enzyme catalyses uridine(38/39/40) in tRNA = pseudouridine(38/39/40) in tRNA. Formation of pseudouridine at positions 38, 39 and 40 in the anticodon stem and loop of transfer RNAs. The chain is tRNA pseudouridine synthase A from Thermotoga maritima (strain ATCC 43589 / DSM 3109 / JCM 10099 / NBRC 100826 / MSB8).